The sequence spans 443 residues: Threonine/serine transporter TdcC (443 aa).

11 consecutive transmembrane segments (helical) span residues 22–42 (TTWT…FFPI), 44–64 (AGFG…PIAF), 97–117 (GVVI…IYGV), 140–160 (FVAL…KDLM), 163–183 (VMSF…LSLI), 207–227 (ILVT…FSPI), 259–279 (ASLL…FTLS), 319–339 (ASII…LGTL), 366–386 (ISMI…PNIL), 389–409 (IEAM…MFAI), and 423–443 (ENLF…YKLF).

This sequence belongs to the amino acid/polyamine transporter 2 family. SdaC/TdcC subfamily.

The protein localises to the cell inner membrane. The catalysed reaction is L-threonine(in) + H(+)(in) = L-threonine(out) + H(+)(out). The enzyme catalyses L-serine(in) + H(+)(in) = L-serine(out) + H(+)(out). Functionally, involved in the import of threonine and serine into the cell, with the concomitant import of a proton (symport system). The sequence is that of Threonine/serine transporter TdcC from Enterobacter sp. (strain 638).